We begin with the raw amino-acid sequence, 98 residues long: Co-chaperonin GroES 1 (98 aa).

It belongs to the GroES chaperonin family. In terms of assembly, heptamer of 7 subunits arranged in a ring. Interacts with the chaperonin GroEL.

Its subcellular location is the cytoplasm. Its function is as follows. Together with the chaperonin GroEL, plays an essential role in assisting protein folding. The GroEL-GroES system forms a nano-cage that allows encapsulation of the non-native substrate proteins and provides a physical environment optimized to promote and accelerate protein folding. GroES binds to the apical surface of the GroEL ring, thereby capping the opening of the GroEL channel. This Rhizobium meliloti (strain 1021) (Ensifer meliloti) protein is Co-chaperonin GroES 1.